Here is a 145-residue protein sequence, read N- to C-terminus: MRTTYMAKPGEVERKWYVIDATGVSLGRLSSEVASILRGKNKPQFTPHIDTGDFVIIINAGKIGLTGKKATDKIYYRHSQYPGGLKSRTAGEMRTNNPEKLLELSIKGMLPKNSLGRQLFKKLHVYGGSEHEHAAQQPEVYELRG.

This sequence belongs to the universal ribosomal protein uL13 family. As to quaternary structure, part of the 50S ribosomal subunit.

This protein is one of the early assembly proteins of the 50S ribosomal subunit, although it is not seen to bind rRNA by itself. It is important during the early stages of 50S assembly. In Listeria monocytogenes serotype 4b (strain CLIP80459), this protein is Large ribosomal subunit protein uL13.